Consider the following 311-residue polypeptide: Ornithine carbamoyltransferase (311 aa).

Carbamoyl phosphate-binding positions include 56–59 (STRT), Gln83, Arg107, and 134–137 (HPTQ). Residues Asn166, Asp230, and 234–235 (SM) contribute to the L-ornithine site. Carbamoyl phosphate is bound by residues 270-271 (CL) and Lys298.

The protein belongs to the aspartate/ornithine carbamoyltransferase superfamily. OTCase family.

The protein localises to the cytoplasm. The enzyme catalyses carbamoyl phosphate + L-ornithine = L-citrulline + phosphate + H(+). It functions in the pathway amino-acid degradation; L-arginine degradation via ADI pathway; carbamoyl phosphate from L-arginine: step 2/2. In terms of biological role, reversibly catalyzes the transfer of the carbamoyl group from carbamoyl phosphate (CP) to the N(epsilon) atom of ornithine (ORN) to produce L-citrulline. The sequence is that of Ornithine carbamoyltransferase from Ignicoccus hospitalis (strain KIN4/I / DSM 18386 / JCM 14125).